The primary structure comprises 479 residues: GDP-fucose protein O-fucosyltransferase 3 (479 aa).

At 1-8 the chain is on the cytoplasmic side; the sequence is MVRIQRRK. A helical; Signal-anchor for type II membrane protein transmembrane segment spans residues 9-31; the sequence is LLASCLCVTATVFLLVTLQVMVE. The Lumenal segment spans residues 32 to 479; the sequence is LGKFERKEFK…QEFWGLVFKD (448 aa). N-linked (GlcNAc...) asparagine glycans are attached at residues Asn110 and Asn168. Cys389 and Cys392 are oxidised to a cystine.

It belongs to the glycosyltransferase 10 family. As to expression, expressed in lung, digestive tract, gall bladder, placenta, kidney, uterus and brain. Not detected in spleen, heart, muscle, liver and pancreas.

It is found in the endoplasmic reticulum membrane. Its subcellular location is the golgi apparatus membrane. The protein resides in the golgi apparatus. The protein localises to the lysosome. It carries out the reaction L-threonyl-[protein] + GDP-beta-L-fucose = 3-O-(alpha-L-fucosyl)-L-threonyl-[protein] + GDP + H(+). The enzyme catalyses L-seryl-[protein] + GDP-beta-L-fucose = 3-O-(alpha-L-fucosyl)-L-seryl-[protein] + GDP + H(+). The protein operates within protein modification; protein glycosylation. Its function is as follows. Protein O-fucosyltransferase that specifically catalyzes O-fucosylation of serine or threonine residues in EMI domains of target proteins, such as MMRN1, MMRN2 and EMID1. Attaches fucose through an O-glycosidic linkage. O-fucosylation of EMI domain-containing proteins may be required for facilitating protein folding and secretion. May also show alpha-(1,3)-fucosyltransferase activity toward the innermost N-acetyl glucosamine (GlcNAc) residue in biantennary N-glycan acceptors. However, this was tested with a library of synthetic substrates and this activity is unsure in vivo. May be involved in biosynthesis of Lewis X-carrying biantennary N-glycans that regulate neuron stem cell self-renewal during brain development. The chain is GDP-fucose protein O-fucosyltransferase 3 from Homo sapiens (Human).